The chain runs to 291 residues: Inactive dihydropteroate synthase 2 (291 aa).

Positions Q15–E272 constitute a Pterin-binding domain.

It belongs to the DHPS family. As to quaternary structure, homodimer.

In terms of biological role, has very low affinity for the DHPS substrate 6-hydroxymethyl-7,8-dihydropterin-pyrophosphate, but can bind the inhibitor dapsone. Seems to lack dihydropteroate synthase activity, and does probably not function in folate metabolism. The protein is Inactive dihydropteroate synthase 2 (folP2) of Mycobacterium leprae (strain TN).